The following is a 341-amino-acid chain: Phosphoribosylformylglycinamidine cyclo-ligase (341 aa).

It belongs to the AIR synthase family.

It localises to the cytoplasm. The catalysed reaction is 2-formamido-N(1)-(5-O-phospho-beta-D-ribosyl)acetamidine + ATP = 5-amino-1-(5-phospho-beta-D-ribosyl)imidazole + ADP + phosphate + H(+). It participates in purine metabolism; IMP biosynthesis via de novo pathway; 5-amino-1-(5-phospho-D-ribosyl)imidazole from N(2)-formyl-N(1)-(5-phospho-D-ribosyl)glycinamide: step 2/2. The protein is Phosphoribosylformylglycinamidine cyclo-ligase of Xanthomonas campestris pv. campestris (strain B100).